A 326-amino-acid polypeptide reads, in one-letter code: Photosystem II assembly factor Ycf39 (326 aa).

This sequence belongs to the NmrA-type oxidoreductase family. Ycf39 subfamily. Purified in several chlorophyll- and carotenoid-containing complexes, including photosystem II (PSII) assembly intermediate complex RCII* (iD1, D1, D2, PsbE, PsbF, PsbI, Ycf39, Ycf48, HliC and HliD) and the Ycf39-Hlip complex (Ycf39, HliC, HliD and pigments). Tagged protein does not pull down mature PSII.

The protein resides in the cellular thylakoid membrane. Its function is as follows. Requires HliD to bind pigments. The Ycf39-Hlip complex binds D1 at an early stage of PSII assembly along with Ycf48, ribosomes and ChlG, the last enzyme in chlorophyll biosynthesis; it may be involved in chlorophyll reuse and delivery to D1 in the initial stages of PSII assembly. The Ycf39-Hlip complex efficiently quenches chlorophyll fluorescence, contributing to photoprotection. This chain is Photosystem II assembly factor Ycf39, found in Synechocystis sp. (strain ATCC 27184 / PCC 6803 / Kazusa).